Reading from the N-terminus, the 154-residue chain is 6,7-dimethyl-8-ribityllumazine synthase (154 aa).

5-amino-6-(D-ribitylamino)uracil is bound by residues phenylalanine 22, 56–58 (AFE), and 80–82 (AVI). 85-86 (AT) is a (2S)-2-hydroxy-3-oxobutyl phosphate binding site. Histidine 88 functions as the Proton donor in the catalytic mechanism. Phenylalanine 113 serves as a coordination point for 5-amino-6-(D-ribitylamino)uracil. Arginine 127 provides a ligand contact to (2S)-2-hydroxy-3-oxobutyl phosphate.

Belongs to the DMRL synthase family. As to quaternary structure, forms an icosahedral capsid composed of 60 subunits, arranged as a dodecamer of pentamers.

It carries out the reaction (2S)-2-hydroxy-3-oxobutyl phosphate + 5-amino-6-(D-ribitylamino)uracil = 6,7-dimethyl-8-(1-D-ribityl)lumazine + phosphate + 2 H2O + H(+). It participates in cofactor biosynthesis; riboflavin biosynthesis; riboflavin from 2-hydroxy-3-oxobutyl phosphate and 5-amino-6-(D-ribitylamino)uracil: step 1/2. In terms of biological role, catalyzes the formation of 6,7-dimethyl-8-ribityllumazine by condensation of 5-amino-6-(D-ribitylamino)uracil with 3,4-dihydroxy-2-butanone 4-phosphate. This is the penultimate step in the biosynthesis of riboflavin. In Geobacillus thermodenitrificans (strain NG80-2), this protein is 6,7-dimethyl-8-ribityllumazine synthase.